Reading from the N-terminus, the 357-residue chain is Phosphate acyltransferase (357 aa).

It belongs to the PlsX family. In terms of assembly, homodimer. Probably interacts with PlsY.

The protein localises to the cytoplasm. It carries out the reaction a fatty acyl-[ACP] + phosphate = an acyl phosphate + holo-[ACP]. It participates in lipid metabolism; phospholipid metabolism. Its function is as follows. Catalyzes the reversible formation of acyl-phosphate (acyl-PO(4)) from acyl-[acyl-carrier-protein] (acyl-ACP). This enzyme utilizes acyl-ACP as fatty acyl donor, but not acyl-CoA. This Roseobacter denitrificans (strain ATCC 33942 / OCh 114) (Erythrobacter sp. (strain OCh 114)) protein is Phosphate acyltransferase.